Here is a 290-residue protein sequence, read N- to C-terminus: 3-hydroxyacyl-thioester dehydratase Y (290 aa).

The tract at residues 147–169 (FGGARGERPAAPEFPDRHPDARI) is disordered. Over residues 151–169 (RGERPAAPEFPDRHPDARI) the composition is skewed to basic and acidic residues. A MaoC-like domain is found at 161 to 271 (PDRHPDARID…AVFRTEVAGS (111 aa)).

This sequence belongs to the enoyl-CoA hydratase/isomerase family.

It catalyses the reaction a (3R)-3-hydroxyacyl-CoA = a (2E)-enoyl-CoA + H2O. The enzyme catalyses (3R)-hydroxyhexanoyl-CoA = (2E)-hexenoyl-CoA + H2O. The catalysed reaction is (2E)-octenoyl-CoA + H2O = (3R)-hydroxyoctanoyl-CoA. It carries out the reaction (3R)-3-hydroxydecanoyl-CoA = (2E)-decenoyl-CoA + H2O. It catalyses the reaction (3R)-3-hydroxydodecanoyl-CoA = (2E)-dodecenoyl-CoA + H2O. The enzyme catalyses (3R)-hydroxyhexadecanoyl-CoA = (2E)-hexadecenoyl-CoA + H2O. Functionally, shows trans-enoyl-CoA hydratase/3-hydroxyacyl-CoA dehydratase activity. In vitro, can hydrate various enoyl-CoA such as (2E)-hexenoyl-CoA, (2E)-octenoyl-CoA, (2E)-decenoyl-CoA, (2E)-dodecenoyl-CoA and (2E)-hexadecenoyl-CoA. May contribute to the persistence of the tuberculosis infection by inducing COX-2 expression in macrophages through MAPK-NF-kappaB signaling pathway. This Mycobacterium tuberculosis (strain ATCC 25618 / H37Rv) protein is 3-hydroxyacyl-thioester dehydratase Y.